Reading from the N-terminus, the 239-residue chain is uncharacterized protein (239 aa).

Transmembrane regions (helical) follow at residues 9-29 (LAIY…SQII), 65-85 (IIYL…YLFI), 94-114 (IILI…TFVV), and 167-187 (IYFA…MHWI).

It localises to the cell membrane. This is an uncharacterized protein from Methanocaldococcus jannaschii (strain ATCC 43067 / DSM 2661 / JAL-1 / JCM 10045 / NBRC 100440) (Methanococcus jannaschii).